The primary structure comprises 282 residues: MRLFKKRNTISERHVKANKRAEDLVPSGLMKRCPNCGLEFFARRLDKYKTCPDCDYGFRLTARERLAWLCEESEEWFKDIQPSDPLHFPNYEAKVAAGKKKTGLNEAVWTGLAKIGGQETALAIMDPFFIMGSLGQMTGEKLTRLIEAATEKRLPVVVFTASGGARMQEGIYSLMQMAKVVNAINRHKAAGLLYLVVLTDPTTGGVTASFASEGDITLAEAHAMVAFAGRRVIEQTIHEQLPKDAQRAETVLKHGFIDRIVLRQEEKETLAWLLKYGGMQDD.

The 254-residue stretch at 29–282 (LMKRCPNCGL…LLKYGGMQDD (254 aa)) folds into the CoA carboxyltransferase N-terminal domain. Cysteine 33, cysteine 36, cysteine 51, and cysteine 54 together coordinate Zn(2+). Residues 33 to 54 (CPNCGLEFFARRLDKYKTCPDC) form a C4-type zinc finger.

This sequence belongs to the AccD/PCCB family. In terms of assembly, acetyl-CoA carboxylase is a heterohexamer composed of biotin carboxyl carrier protein (AccB), biotin carboxylase (AccC) and two subunits each of ACCase subunit alpha (AccA) and ACCase subunit beta (AccD). The cofactor is Zn(2+).

Its subcellular location is the cytoplasm. The catalysed reaction is N(6)-carboxybiotinyl-L-lysyl-[protein] + acetyl-CoA = N(6)-biotinyl-L-lysyl-[protein] + malonyl-CoA. It participates in lipid metabolism; malonyl-CoA biosynthesis; malonyl-CoA from acetyl-CoA: step 1/1. Component of the acetyl coenzyme A carboxylase (ACC) complex. Biotin carboxylase (BC) catalyzes the carboxylation of biotin on its carrier protein (BCCP) and then the CO(2) group is transferred by the transcarboxylase to acetyl-CoA to form malonyl-CoA. The sequence is that of Acetyl-coenzyme A carboxylase carboxyl transferase subunit beta from Lactobacillus delbrueckii subsp. bulgaricus (strain ATCC 11842 / DSM 20081 / BCRC 10696 / JCM 1002 / NBRC 13953 / NCIMB 11778 / NCTC 12712 / WDCM 00102 / Lb 14).